The chain runs to 405 residues: Acetylornithine aminotransferase 2 (405 aa).

Residues 105–106 and phenylalanine 138 contribute to the pyridoxal 5'-phosphate site; that span reads GT. N(2)-acetyl-L-ornithine is bound at residue arginine 141. 224–227 provides a ligand contact to pyridoxal 5'-phosphate; sequence DEVQ. The residue at position 254 (lysine 254) is an N6-(pyridoxal phosphate)lysine. N(2)-acetyl-L-ornithine is bound at residue serine 282. Threonine 283 is a pyridoxal 5'-phosphate binding site.

The protein belongs to the class-III pyridoxal-phosphate-dependent aminotransferase family. ArgD subfamily. Homodimer. Requires pyridoxal 5'-phosphate as cofactor.

The protein localises to the cytoplasm. It catalyses the reaction N(2)-acetyl-L-ornithine + 2-oxoglutarate = N-acetyl-L-glutamate 5-semialdehyde + L-glutamate. It functions in the pathway amino-acid biosynthesis; L-arginine biosynthesis; N(2)-acetyl-L-ornithine from L-glutamate: step 4/4. The sequence is that of Acetylornithine aminotransferase 2 from Caulobacter vibrioides (strain ATCC 19089 / CIP 103742 / CB 15) (Caulobacter crescentus).